A 179-amino-acid chain; its full sequence is Protein PLASTID REDOX INSENSITIVE 2, chloroplastic (179 aa).

Residues 1 to 69 (MASMHEALFS…SLSRRGFVCR (69 aa)) constitute a chloroplast transit peptide.

In terms of assembly, binds DNA when in complex with CSP41b.

It is found in the plastid. Its subcellular location is the chloroplast stroma. The protein resides in the chloroplast nucleoid. Involved in redox-mediated retrograde signaling to synchronize the expression of photosynthetic genes from both the nuclear and plastidic genomes, especially in excess light conditions. Required for full expression of genes transcribed by the plastid-encoded RNA polymerase (PEP). Essential for embryo development. The protein is Protein PLASTID REDOX INSENSITIVE 2, chloroplastic of Arabidopsis thaliana (Mouse-ear cress).